We begin with the raw amino-acid sequence, 173 residues long: Ribosome maturation factor RimM (173 aa).

In terms of domain architecture, PRC barrel spans 95 to 169 (PDEFYDHELE…TIVIDPPEGL (75 aa)).

The protein belongs to the RimM family. In terms of assembly, binds ribosomal protein uS19.

The protein resides in the cytoplasm. Its function is as follows. An accessory protein needed during the final step in the assembly of 30S ribosomal subunit, possibly for assembly of the head region. Essential for efficient processing of 16S rRNA. May be needed both before and after RbfA during the maturation of 16S rRNA. It has affinity for free ribosomal 30S subunits but not for 70S ribosomes. The polypeptide is Ribosome maturation factor RimM (Mycolicibacterium smegmatis (strain ATCC 700084 / mc(2)155) (Mycobacterium smegmatis)).